Consider the following 761-residue polypeptide: Ribonucleoside-diphosphate reductase subunit alpha (761 aa).

The region spanning 5–95 (LFVTKRNGKI…IFHLRKKAFG (91 aa)) is the ATP-cone domain. Residues Lys9, 15 to 21 (ELINLDK), Thr55, and Lys91 each bind ATP. Residue Thr209 coordinates GDP. A disulfide bridge links Cys225 with Cys462. DTTP is bound by residues 232-234 (DNL), Arg262, and Arg269. Residue Asn437 participates in GDP binding. The active-site Proton acceptor is the Asn437. Catalysis depends on Cys439, which acts as the Cysteine radical intermediate. GDP contacts are provided by residues Glu441 and 623–625 (ETS). Glu441 (proton acceptor) is an active-site residue.

The protein belongs to the ribonucleoside diphosphate reductase large chain family. As to quaternary structure, tetramer of two alpha and two beta subunits.

The enzyme catalyses a 2'-deoxyribonucleoside 5'-diphosphate + [thioredoxin]-disulfide + H2O = a ribonucleoside 5'-diphosphate + [thioredoxin]-dithiol. Its activity is regulated as follows. Under complex allosteric control mediated by deoxynucleoside triphosphates and ATP binding to separate specificity and activation sites on the alpha subunit. The type of nucleotide bound at the specificity site determines substrate preference. It seems probable that ATP makes the enzyme reduce CDP and UDP, dGTP favors ADP reduction and dTTP favors GDP reduction. Stimulated by ATP and inhibited by dATP binding to the activity site. Its function is as follows. Provides the precursors necessary for DNA synthesis. Catalyzes the biosynthesis of deoxyribonucleotides from the corresponding ribonucleotides. This chain is Ribonucleoside-diphosphate reductase subunit alpha (nrdA), found in Buchnera aphidicola subsp. Baizongia pistaciae (strain Bp).